We begin with the raw amino-acid sequence, 333 residues long: Foldase protein PrsA (333 aa).

The first 21 residues, 1 to 21, serve as a signal peptide directing secretion; sequence MKKRTIATGLVTLLSIVTLAA. Cys-22 carries the N-palmitoyl cysteine lipid modification. The S-diacylglycerol cysteine moiety is linked to residue Cys-22. Residues 144–237 enclose the PpiC domain; that stretch reads KPEVTAQVIQ…PVYYIVKITK (94 aa). The tract at residues 296 to 333 is disordered; sequence AASGSGSSGSTTTTTAASSAATTAADDQTTAAETTAAE.

It belongs to the PrsA family.

It is found in the cell membrane. It carries out the reaction [protein]-peptidylproline (omega=180) = [protein]-peptidylproline (omega=0). Functionally, plays a major role in protein secretion by helping the post-translocational extracellular folding of several secreted proteins. The polypeptide is Foldase protein PrsA (Streptococcus mutans serotype c (strain ATCC 700610 / UA159)).